The following is a 360-amino-acid chain: Protein RecA (360 aa).

66 to 73 (GPESSGKT) is an ATP binding site. A disordered region spans residues 330–360 (DAKAIEERENPEKVKQDKEVPVNKDASDEKK).

Belongs to the RecA family.

It is found in the cytoplasm. Its function is as follows. Can catalyze the hydrolysis of ATP in the presence of single-stranded DNA, the ATP-dependent uptake of single-stranded DNA by duplex DNA, and the ATP-dependent hybridization of homologous single-stranded DNAs. It interacts with LexA causing its activation and leading to its autocatalytic cleavage. The chain is Protein RecA from Lactobacillus johnsonii (strain CNCM I-12250 / La1 / NCC 533).